Reading from the N-terminus, the 411-residue chain is Meiotically up-regulated gene 147 protein (411 aa).

3 disordered regions span residues 1 to 52 (MLAQ…FENK), 102 to 137 (EREE…ELAD), and 156 to 191 (HQHE…HYES). Positions 33 to 43 (TQNESNLQQSE) are enriched in polar residues. The segment covering 156–172 (HQHEDEFSSSNKDKGFT) has biased composition (basic and acidic residues).

The protein resides in the cytoplasm. Its subcellular location is the nucleus. In terms of biological role, has a role in meiosis. The chain is Meiotically up-regulated gene 147 protein (mug147) from Schizosaccharomyces pombe (strain 972 / ATCC 24843) (Fission yeast).